Consider the following 420-residue polypeptide: D-tagatose-1,6-bisphosphate aldolase subunit GatZ (420 aa).

The protein belongs to the GatZ/KbaZ family. GatZ subfamily. In terms of assembly, forms a complex with GatY.

The protein operates within carbohydrate metabolism; D-tagatose 6-phosphate degradation; D-glyceraldehyde 3-phosphate and glycerone phosphate from D-tagatose 6-phosphate: step 2/2. In terms of biological role, component of the tagatose-1,6-bisphosphate aldolase GatYZ that is required for full activity and stability of the Y subunit. Could have a chaperone-like function for the proper and stable folding of GatY. When expressed alone, GatZ does not show any aldolase activity. Is involved in the catabolism of galactitol. The chain is D-tagatose-1,6-bisphosphate aldolase subunit GatZ from Escherichia coli (strain SE11).